The sequence spans 462 residues: ATP synthase subunit beta (462 aa).

150–157 (GGAGVGKT) contributes to the ATP binding site.

Belongs to the ATPase alpha/beta chains family. As to quaternary structure, F-type ATPases have 2 components, CF(1) - the catalytic core - and CF(0) - the membrane proton channel. CF(1) has five subunits: alpha(3), beta(3), gamma(1), delta(1), epsilon(1). CF(0) has three main subunits: a(1), b(2) and c(9-12). The alpha and beta chains form an alternating ring which encloses part of the gamma chain. CF(1) is attached to CF(0) by a central stalk formed by the gamma and epsilon chains, while a peripheral stalk is formed by the delta and b chains.

Its subcellular location is the cell membrane. It carries out the reaction ATP + H2O + 4 H(+)(in) = ADP + phosphate + 5 H(+)(out). In terms of biological role, produces ATP from ADP in the presence of a proton gradient across the membrane. The catalytic sites are hosted primarily by the beta subunits. This Wigglesworthia glossinidia brevipalpis protein is ATP synthase subunit beta.